We begin with the raw amino-acid sequence, 325 residues long: GMP reductase (325 aa).

Residue C174 is the Thioimidate intermediate of the active site. 203–226 (IIADGGIRTHGDIAKSIRFGATMV) contributes to the NADP(+) binding site.

It belongs to the IMPDH/GMPR family. GuaC type 2 subfamily.

The enzyme catalyses IMP + NH4(+) + NADP(+) = GMP + NADPH + 2 H(+). Its function is as follows. Catalyzes the irreversible NADPH-dependent deamination of GMP to IMP. It functions in the conversion of nucleobase, nucleoside and nucleotide derivatives of G to A nucleotides, and in maintaining the intracellular balance of A and G nucleotides. This is GMP reductase from Helicobacter pylori (strain J99 / ATCC 700824) (Campylobacter pylori J99).